The sequence spans 334 residues: G-protein coupled receptor 12 (334 aa).

Over 1-48 the chain is Extracellular; that stretch reads MNEDLKVNLSGLPRDYLDAAAAENISAAVSSRVPAVEPEPELVVNPWD. N-linked (GlcNAc...) asparagine glycans are attached at residues Asn8 and Asn24. A helical transmembrane segment spans residues 49–69; it reads IVLCTSGTLISCENAIVVLII. The Cytoplasmic segment spans residues 70-77; sequence FHNPSLRA. A helical transmembrane segment spans residues 78 to 98; the sequence is PMFLLIGSLALADLLAGIGLI. The Extracellular portion of the chain corresponds to 99–113; that stretch reads TNFVFAYLLQSEATK. The chain crosses the membrane as a helical span at residues 114 to 134; that stretch reads LVTIGLIVASFSASVCSLLAI. The Cytoplasmic segment spans residues 135-158; it reads TVDRYLSLYYALTYHSERTVTFTY. Residues 159-179 traverse the membrane as a helical segment; that stretch reads VMLVMLWGTSICLGLLPVMGW. Residues 180-199 are Extracellular-facing; sequence NCLRDESTCSVVRPLTKNNA. Residues 200–220 traverse the membrane as a helical segment; that stretch reads AILSVSFLFMFALMLQLYIQI. Residues 221-252 lie on the Cytoplasmic side of the membrane; that stretch reads CKIVMRHAHQIALQHHFLATSHYVTTRKGVST. Residues 253–273 traverse the membrane as a helical segment; the sequence is LAIILGTFAACWMPFTLYSLI. Residues 274–282 are Extracellular-facing; that stretch reads ADYTYPSIY. Residues 283 to 303 traverse the membrane as a helical segment; it reads TYATLLPATYNSIINPVIYAF. Residues 304–334 are Cytoplasmic-facing; it reads RNQEIQKALCLICCGCIPSSLAQRARSPSDV. Residue Cys317 is the site of S-palmitoyl cysteine attachment. Phosphoserine occurs at positions 330 and 332.

It belongs to the G-protein coupled receptor 1 family.

Its subcellular location is the cell membrane. Functionally, promotes neurite outgrowth and blocks myelin inhibition in neurons. Receptor with constitutive G(s) signaling activity that stimulates cyclic AMP production. The sequence is that of G-protein coupled receptor 12 (GPR12) from Homo sapiens (Human).